A 299-amino-acid chain; its full sequence is Plasmodesmata-located protein 5 (299 aa).

A signal peptide spans 1–25; the sequence is MIKTKTTSLLCFLLTAVILMNPSSS. The Extracellular segment spans residues 26–264; that stretch reads SPTDNYIYAV…NKDDNGVGKT (239 aa). Gnk2-homologous domains are found at residues 29 to 135 and 137 to 237; these read DNYI…NKSF and GVQD…VGGS. Cystine bridges form between cysteine 36–cysteine 113, cysteine 89–cysteine 98, cysteine 101–cysteine 126, cysteine 148–cysteine 215, cysteine 191–cysteine 200, and cysteine 203–cysteine 228. The chain crosses the membrane as a helical span at residues 265-285; it reads LAIIIGIVTLIILLVVFLAFV. The necessary and sufficient for plasmodesmal targeting stretch occupies residues 265-285; sequence LAIIIGIVTLIILLVVFLAFV. Residues 286–299 are Cytoplasmic-facing; sequence GKCCRKLQDEKWCK.

This sequence belongs to the cysteine-rich repeat secretory protein family. Plasmodesmata-located proteins (PDLD) subfamily. Monomer. Interacts with PDLP1. As to quaternary structure, (Microbial infection) Interacts with Grapevine fanleaf virus (GFLV) 2B-MP. In terms of tissue distribution, highly expressed in inflorescence nodes and rosette senescent leaves. Mostly expressed in cell wall junctions between leaf epidermal and mesophyl cells, and to a lesser extent at the cross walls between epidermal or cortex cells within the hypocotyl (at protein level). Low vascular expression in seedling and mature leaf, but high expression in senescing leaves (at protein level).

Its subcellular location is the cell membrane. The protein resides in the cell junction. It is found in the plasmodesma. Functionally, modulates cell-to-cell trafficking. Has a positive role in innate immunity. Required for systemic acquired resistance (SAR) which is mediated by the signaling molecules azelaic acid (AzA), glycerol-3-phosphate (G3P), and salicylic acid (SA). Negative regulator of plasmodesmata permeability triggered by SA during immune responses, through regulation of callose deposition. Delays the trafficking of Tobacco Mosaic Virus (TMV) movement protein (MP). Required for symplastic signal transport. The protein is Plasmodesmata-located protein 5 of Arabidopsis thaliana (Mouse-ear cress).